We begin with the raw amino-acid sequence, 267 residues long: tRNA pseudouridine synthase A (267 aa).

Residue aspartate 55 is the Nucleophile of the active site. Substrate is bound at residue tyrosine 111.

It belongs to the tRNA pseudouridine synthase TruA family.

It carries out the reaction uridine(38/39/40) in tRNA = pseudouridine(38/39/40) in tRNA. Its function is as follows. Formation of pseudouridine at positions 38, 39 and 40 in the anticodon stem and loop of transfer RNAs. This Thermococcus gammatolerans (strain DSM 15229 / JCM 11827 / EJ3) protein is tRNA pseudouridine synthase A.